The following is a 29-amino-acid chain: Cytochrome c oxidase subunit 7A2, mitochondrial (29 aa).

K10 carries the post-translational modification N6-acetyllysine.

The protein belongs to the cytochrome c oxidase VIIa family. Component of the cytochrome c oxidase (complex IV, CIV), a multisubunit enzyme composed of 14 subunits. The complex is composed of a catalytic core of 3 subunits MT-CO1, MT-CO2 and MT-CO3, encoded in the mitochondrial DNA, and 11 supernumerary subunits COX4I, COX5A, COX5B, COX6A, COX6B, COX6C, COX7A, COX7B, COX7C, COX8 and NDUFA4, which are encoded in the nuclear genome. The complex exists as a monomer or a dimer and forms supercomplexes (SCs) in the inner mitochondrial membrane with NADH-ubiquinone oxidoreductase (complex I, CI) and ubiquinol-cytochrome c oxidoreductase (cytochrome b-c1 complex, complex III, CIII), resulting in different assemblies (supercomplex SCI(1)III(2)IV(1) and megacomplex MCI(2)III(2)IV(2)). Interacts with PET100.

It localises to the mitochondrion inner membrane. The protein operates within energy metabolism; oxidative phosphorylation. In terms of biological role, component of the cytochrome c oxidase, the last enzyme in the mitochondrial electron transport chain which drives oxidative phosphorylation. The respiratory chain contains 3 multisubunit complexes succinate dehydrogenase (complex II, CII), ubiquinol-cytochrome c oxidoreductase (cytochrome b-c1 complex, complex III, CIII) and cytochrome c oxidase (complex IV, CIV), that cooperate to transfer electrons derived from NADH and succinate to molecular oxygen, creating an electrochemical gradient over the inner membrane that drives transmembrane transport and the ATP synthase. Cytochrome c oxidase is the component of the respiratory chain that catalyzes the reduction of oxygen to water. Electrons originating from reduced cytochrome c in the intermembrane space (IMS) are transferred via the dinuclear copper A center (CU(A)) of subunit 2 and heme A of subunit 1 to the active site in subunit 1, a binuclear center (BNC) formed by heme A3 and copper B (CU(B)). The BNC reduces molecular oxygen to 2 water molecules using 4 electrons from cytochrome c in the IMS and 4 protons from the mitochondrial matrix. The sequence is that of Cytochrome c oxidase subunit 7A2, mitochondrial (COX7A2) from Canis lupus familiaris (Dog).